The following is a 353-amino-acid chain: Photosystem II protein D1 (353 aa).

Threonine 2 carries the N-acetylthreonine modification. Threonine 2 is subject to Phosphothreonine. The next 3 helical transmembrane spans lie at 29-46 (YIGWFGVLMIPTLLTATS), 118-133 (HFLLGVACYMGREWEL), and 142-156 (WIAVAYSAPVAAAAA). A chlorophyll a-binding site is contributed by histidine 118. Tyrosine 126 contributes to the pheophytin a binding site. [CaMn4O5] cluster is bound by residues aspartate 170 and glutamate 189. Residues 197–218 (FHMLGVAGVFGGSLFSAMHGSL) form a helical membrane-spanning segment. Chlorophyll a is bound at residue histidine 198. A quinone is bound by residues histidine 215 and 264 to 265 (SF). Histidine 215 lines the Fe cation pocket. Histidine 272 contributes to the Fe cation binding site. Residues 274–288 (FLAAWPVVGIWFTAL) traverse the membrane as a helical segment. Residues histidine 332, glutamate 333, aspartate 342, and alanine 344 each coordinate [CaMn4O5] cluster. Positions 345–353 (AVEAPSING) are excised as a propeptide.

This sequence belongs to the reaction center PufL/M/PsbA/D family. In terms of assembly, PSII is composed of 1 copy each of membrane proteins PsbA, PsbB, PsbC, PsbD, PsbE, PsbF, PsbH, PsbI, PsbJ, PsbK, PsbL, PsbM, PsbT, PsbX, PsbY, PsbZ, Psb30/Ycf12, at least 3 peripheral proteins of the oxygen-evolving complex and a large number of cofactors. It forms dimeric complexes. The cofactor is The D1/D2 heterodimer binds P680, chlorophylls that are the primary electron donor of PSII, and subsequent electron acceptors. It shares a non-heme iron and each subunit binds pheophytin, quinone, additional chlorophylls, carotenoids and lipids. D1 provides most of the ligands for the Mn4-Ca-O5 cluster of the oxygen-evolving complex (OEC). There is also a Cl(-1) ion associated with D1 and D2, which is required for oxygen evolution. The PSII complex binds additional chlorophylls, carotenoids and specific lipids.. In terms of processing, tyr-161 forms a radical intermediate that is referred to as redox-active TyrZ, YZ or Y-Z. C-terminally processed by CTPA; processing is essential to allow assembly of the oxygen-evolving complex and thus photosynthetic growth.

Its subcellular location is the plastid. It localises to the chloroplast thylakoid membrane. It carries out the reaction 2 a plastoquinone + 4 hnu + 2 H2O = 2 a plastoquinol + O2. In terms of biological role, photosystem II (PSII) is a light-driven water:plastoquinone oxidoreductase that uses light energy to abstract electrons from H(2)O, generating O(2) and a proton gradient subsequently used for ATP formation. It consists of a core antenna complex that captures photons, and an electron transfer chain that converts photonic excitation into a charge separation. The D1/D2 (PsbA/PsbD) reaction center heterodimer binds P680, the primary electron donor of PSII as well as several subsequent electron acceptors. This chain is Photosystem II protein D1, found in Vitis vinifera (Grape).